Consider the following 254-residue polypeptide: 4-hydroxy-tetrahydrodipicolinate reductase (254 aa).

NAD(+)-binding positions include 8–13, aspartate 35, 86–88, and 110–113; these read GCSGKM, CST, and SANM. The Proton donor/acceptor role is filled by histidine 143. Histidine 144 provides a ligand contact to (S)-2,3,4,5-tetrahydrodipicolinate. The Proton donor role is filled by lysine 147. 153–154 serves as a coordination point for (S)-2,3,4,5-tetrahydrodipicolinate; that stretch reads GT.

This sequence belongs to the DapB family.

It localises to the cytoplasm. The enzyme catalyses (S)-2,3,4,5-tetrahydrodipicolinate + NAD(+) + H2O = (2S,4S)-4-hydroxy-2,3,4,5-tetrahydrodipicolinate + NADH + H(+). It catalyses the reaction (S)-2,3,4,5-tetrahydrodipicolinate + NADP(+) + H2O = (2S,4S)-4-hydroxy-2,3,4,5-tetrahydrodipicolinate + NADPH + H(+). It participates in amino-acid biosynthesis; L-lysine biosynthesis via DAP pathway; (S)-tetrahydrodipicolinate from L-aspartate: step 4/4. Catalyzes the conversion of 4-hydroxy-tetrahydrodipicolinate (HTPA) to tetrahydrodipicolinate. This chain is 4-hydroxy-tetrahydrodipicolinate reductase, found in Clostridium perfringens (strain SM101 / Type A).